Reading from the N-terminus, the 327-residue chain is Phenylalanine--tRNA ligase alpha subunit (327 aa).

A Mg(2+)-binding site is contributed by E252.

This sequence belongs to the class-II aminoacyl-tRNA synthetase family. Phe-tRNA synthetase alpha subunit type 1 subfamily. Tetramer of two alpha and two beta subunits. Mg(2+) serves as cofactor.

Its subcellular location is the cytoplasm. It carries out the reaction tRNA(Phe) + L-phenylalanine + ATP = L-phenylalanyl-tRNA(Phe) + AMP + diphosphate + H(+). In Yersinia pseudotuberculosis serotype O:1b (strain IP 31758), this protein is Phenylalanine--tRNA ligase alpha subunit.